Reading from the N-terminus, the 306-residue chain is Small ribosomal subunit protein uS2 (306 aa).

The interval 257 to 306 is disordered; sequence EGDKKDETAAAAEVQTSAETEKVADAEKPAEAVAEAEAEAPAADADAEQA. The span at 275 to 286 shows a compositional bias: basic and acidic residues; sequence ETEKVADAEKPA. Residues 287 to 300 show a composition bias toward low complexity; that stretch reads EAVAEAEAEAPAAD.

This sequence belongs to the universal ribosomal protein uS2 family.

This Streptomyces griseus subsp. griseus (strain JCM 4626 / CBS 651.72 / NBRC 13350 / KCC S-0626 / ISP 5235) protein is Small ribosomal subunit protein uS2.